The following is a 461-amino-acid chain: Steroidogenic factor 1 (461 aa).

Positions 10–85 (DELCPVCGDK…VGMRLEAVRA (76 aa)) form a DNA-binding region, nuclear receptor. The NR C4-type zinc-finger motif lies at 13–33 (CPVCGDKVSGYHYGLLTCESC). N6-acetyllysine is present on residues lysine 34, lysine 38, and lysine 72. The segment at 49–73 (CTESQSCKIDKTQRKRCPFCRFQKC) adopts an NR C4-type zinc-finger fold. The segment at 116–158 (NGFKLETGPPVGVPPPPPPPPDYMLPHGLHASEPKGLASGPPA) is disordered. Lysine 119 participates in a covalent cross-link: Glycyl lysine isopeptide (Lys-Gly) (interchain with G-Cter in SUMO). Residues 126–138 (VGVPPPPPPPPDY) show a composition bias toward pro residues. Residue lysine 194 forms a Glycyl lysine isopeptide (Lys-Gly) (interchain with G-Cter in SUMO) linkage. Serine 203 is subject to Phosphoserine; by CDK7. The NR LBD domain occupies 222–459 (GVPELILQLL…NLLIEMLQAK (238 aa)). Positions 230–461 (LLQLEPDEDQ…LIEMLQAKQT (232 aa)) are important for dimerization. A 1,2-diacyl-sn-glycero-3-phosphocholine-binding residues include glycine 341, tyrosine 436, and lysine 440.

The protein belongs to the nuclear hormone receptor family. NR5 subfamily. Binds DNA as a monomer. Part of a complex consisting of SFPQ, NONO and NR5A1. Interacts with NR0B2. Interacts with DGKQ and CDK7. Binds to and activated by HIPK3. In terms of processing, may be regulated by phosphorylation and dephosphorylation. Acetylation stimulates the transcriptional activity. Post-translationally, sumoylation reduces CDK7-mediated phosphorylation on Ser-203. In terms of processing, phosphorylated on Ser-203 by CDK7. This phosphorylation promotes transcriptional activity. As to expression, adrenal, ovary, testis, placenta, adipocyte, and brain.

Its subcellular location is the nucleus. Its function is as follows. Transcriptional activator. Seems to be essential for sexual differentiation and formation of the primary steroidogenic tissues. Binds to the Ad4 site found in the promoter region of steroidogenic P450 genes such as CYP11A, CYP11B and CYP21B. Also regulates the AMH/Muellerian inhibiting substance gene as well as the AHCH and STAR genes. 5'-YCAAGGYC-3' and 5'-RRAGGTCA-3' are the consensus sequences for the recognition by NR5A1. The SFPQ-NONO-NR5A1 complex binds to the CYP17 promoter and regulates basal and cAMP-dependent transcriptional activity. Binds phospholipids with a phosphatidylinositol (PI) headgroup, in particular PI(3,4)P2 and PI(3,4,5)P3. Activated by the phosphorylation of NR5A1 by HIPK3 leading to increased steroidogenic gene expression upon cAMP signaling pathway stimulation. The sequence is that of Steroidogenic factor 1 (NR5A1) from Bos taurus (Bovine).